A 158-amino-acid chain; its full sequence is Coenzyme F420 hydrogenase subunit delta (158 aa).

The protein belongs to the peptidase A31 family.

This chain is Coenzyme F420 hydrogenase subunit delta (frhD), found in Methanothermobacter thermautotrophicus (strain ATCC 29096 / DSM 1053 / JCM 10044 / NBRC 100330 / Delta H) (Methanobacterium thermoautotrophicum).